The sequence spans 170 residues: F1 capsule antigen (170 aa).

The N-terminal stretch at 1 to 21 (MKKISSVIAIALFGTIATANA) is a signal peptide. The segment at 100–150 (GNNHQFTTKVIGKDSRDFDISPKVNGENLVGDDVVLATGSQDFFVRSIGSK) is contains potential antigenic determinants that may stimulate T-cells.

It localises to the secreted. Its subcellular location is the capsule. The sequence is that of F1 capsule antigen (caf1) from Yersinia pestis.